The chain runs to 173 residues: RNA pyrophosphohydrolase (173 aa).

In terms of domain architecture, Nudix hydrolase spans Pro11 to Ser164. A Nudix box motif is present at residues Gly52–Gly73.

This sequence belongs to the Nudix hydrolase family. RppH subfamily. A divalent metal cation is required as a cofactor.

In terms of biological role, accelerates the degradation of transcripts by removing pyrophosphate from the 5'-end of triphosphorylated RNA, leading to a more labile monophosphorylated state that can stimulate subsequent ribonuclease cleavage. The protein is RNA pyrophosphohydrolase of Bartonella tribocorum (strain CIP 105476 / IBS 506).